We begin with the raw amino-acid sequence, 755 residues long: Sentrin-specific protease 5 (755 aa).

Residues 268-321 (VQKVTGDHQETRRENGEGGSCSPFPSPEPKDPSCRHQPYFPDMDSSAVVKGTNS) form a disordered region. A compositionally biased stretch (basic and acidic residues) spans 272-283 (TGDHQETRRENG). Residues 567 to 724 (HMLDMDDLAT…VFVLQYCKCL (158 aa)) are protease. Residues His646, Asp663, and Cys713 contribute to the active site.

It belongs to the peptidase C48 family. Interacts with CCAR2.

The protein localises to the nucleus. It is found in the nucleolus. In terms of biological role, protease that catalyzes two essential functions in the SUMO pathway: processing of full-length SUMO3 to its mature form and deconjugation of SUMO2 and SUMO3 from targeted proteins. Has weak proteolytic activity against full-length SUMO1 or SUMO1 conjugates. Required for cell division. This Homo sapiens (Human) protein is Sentrin-specific protease 5 (SENP5).